A 335-amino-acid chain; its full sequence is dTDP-glucose 4,6-dehydratase (335 aa).

NAD(+)-binding positions include 11–12, 38–41, 61–62, 81–85, and threonine 100; these read FI, DKLT, DI, and FAAET. A substrate-binding site is contributed by threonine 85. Threonine 125 serves as a coordination point for substrate. The active-site Proton donor is the aspartate 126. Active-site proton acceptor residues include glutamate 127 and tyrosine 149. NAD(+) is bound at residue 149 to 153; that stretch reads YSASK. Substrate is bound at residue asparagine 178. Residue asparagine 179 coordinates NAD(+). Substrate-binding positions include 188–189, 204–206, arginine 213, asparagine 248, and 271–275; these read KI, PLY, and DRKGH.

The protein belongs to the NAD(P)-dependent epimerase/dehydratase family. dTDP-glucose dehydratase subfamily. NAD(+) is required as a cofactor.

It catalyses the reaction dTDP-alpha-D-glucose = dTDP-4-dehydro-6-deoxy-alpha-D-glucose + H2O. Its pathway is antibiotic biosynthesis. Functionally, involved in the biosynthesis of the two 2,6-deoxysugars, dTDP-L-oleandrose and dTDP-D-desosamine, attached to the macrolactone ring oleandolide to produce the aglycone antibiotic oleandomycin. Catalyzes the dehydration of dTDP-D-glucose to form dTDP-6-deoxy-D-xylo-4-hexulose via a three-step process involving oxidation, dehydration and reduction. This is dTDP-glucose 4,6-dehydratase from Streptomyces antibioticus.